The primary structure comprises 893 residues: Dolichyl-phosphate-mannose--protein mannosyltransferase 1 (893 aa).

7 helical membrane passes run 29-49, 77-97, 124-144, 147-167, 170-190, 224-244, and 258-278; these read FSFL…CVRA, LLMD…AALT, LFTC…VYFP, SKTA…LITM, YIMI…YWSV, AMFT…NLLG, and FSYI…VFAV. An MIR 1 domain is found at 310–364; the sequence is FADVAYGSLVTIRNAIPEHGYLHSSELLYPEGTEQQIISLVDEPNQNALWIIEHE. An N-linked (GlcNAc...) asparagine glycan is attached at Asn-370. MIR domains are found at residues 374–433 and 443–499; these read IELL…IQIL and NGTV…IESN. N-linked (GlcNAc...) asparagine glycosylation is present at Asn-443. The residue at position 451 (Thr-451) is a Phosphothreonine. 3 consecutive transmembrane segments (helical) span residues 573 to 593, 610 to 630, and 643 to 663; these read FVWY…IFCL, YNYN…PYIL, and ALYF…NAVF. Asn-665 is a glycosylation site (N-linked (GlcNAc...) asparagine). A helical membrane pass occupies residues 671–691; sequence ALSVIIMALMFLVYRLYSPFT. A glycan (N-linked (GlcNAc...) asparagine) is linked at Asn-720. A disordered region spans residues 785 to 893; it reads KAEQEAREAA…VAESAQARVE (109 aa). The segment covering 786-806 has biased composition (basic and acidic residues); sequence AEQEAREAAEKAASEAAERSS. Low complexity-rich tracts occupy residues 807–823 and 854–864; these read SEAA…AASV and MEAAALNNAAE. Polar residues predominate over residues 868–878; the sequence is VVGSSPESVAS.

This sequence belongs to the glycosyltransferase 39 family.

The protein resides in the endoplasmic reticulum membrane. Its subcellular location is the nucleus membrane. It carries out the reaction a di-trans,poly-cis-dolichyl beta-D-mannosyl phosphate + L-seryl-[protein] = 3-O-(alpha-D-mannosyl)-L-seryl-[protein] + a di-trans,poly-cis-dolichyl phosphate + H(+). The catalysed reaction is a di-trans,poly-cis-dolichyl beta-D-mannosyl phosphate + L-threonyl-[protein] = 3-O-(alpha-D-mannosyl)-L-threonyl-[protein] + a di-trans,poly-cis-dolichyl phosphate + H(+). Its pathway is protein modification; protein glycosylation. In terms of biological role, transfers mannose from Dol-P-mannose to Ser or Thr residues on proteins. Required for normal cell growth and septum formation. Shown to actively O-mannosylate wsc1. The polypeptide is Dolichyl-phosphate-mannose--protein mannosyltransferase 1 (ogm1) (Schizosaccharomyces pombe (strain 972 / ATCC 24843) (Fission yeast)).